The primary structure comprises 134 residues: Protein LctB (134 aa).

The protein is Protein LctB (lctB) of Bacillus caldotenax.